The sequence spans 562 residues: uncharacterized protein (562 aa).

Transmembrane regions (helical) follow at residues 15–34, 41–63, 78–97, 104–126, and 165–187; these read WGGG…AFGI, VAGI…HFNL, LILF…FSAF, LNML…HFIT, and IALG…LLGL. RCK C-terminal domains lie at 204–286 and 289–374; these read QGLG…ITAF and KPIE…VLGN. 6 helical membrane-spanning segments follow: residues 384–403, 413–430, 450–472, 476–498, 505–524, and 539–561; these read LIPI…IPFM, LGLA…SRFG, IGIS…ETII, GYVW…GFIG, NYYT…PALA, and YATV…ILSL.

This sequence belongs to the AAE transporter (TC 2.A.81) family.

The protein resides in the cell membrane. This is an uncharacterized protein from Bacteroides fragilis (strain YCH46).